An 812-amino-acid polypeptide reads, in one-letter code: Phenylalanine--tRNA ligase beta subunit (812 aa).

The region spanning 39–155 is the tRNA-binding domain; that stretch reads SKTFAPFTIA…ADAPVGAGYA (117 aa). The B5 domain occupies 405–480; sequence PEDRVIDFPL…RIVGVDKVPM (76 aa). 4 residues coordinate Mg(2+): aspartate 458, aspartate 464, glutamate 467, and glutamate 468. The region spanning 718-811 is the FDX-ACB domain; it reads PAFQPVSRDF…VAKRTGGSLR (94 aa).

Belongs to the phenylalanyl-tRNA synthetase beta subunit family. Type 1 subfamily. As to quaternary structure, tetramer of two alpha and two beta subunits. It depends on Mg(2+) as a cofactor.

It localises to the cytoplasm. The enzyme catalyses tRNA(Phe) + L-phenylalanine + ATP = L-phenylalanyl-tRNA(Phe) + AMP + diphosphate + H(+). The chain is Phenylalanine--tRNA ligase beta subunit from Nitrobacter winogradskyi (strain ATCC 25391 / DSM 10237 / CIP 104748 / NCIMB 11846 / Nb-255).